The sequence spans 152 residues: Large ribosomal subunit protein bL9 (152 aa).

This sequence belongs to the bacterial ribosomal protein bL9 family.

Functionally, binds to the 23S rRNA. The chain is Large ribosomal subunit protein bL9 from Rippkaea orientalis (strain PCC 8801 / RF-1) (Cyanothece sp. (strain PCC 8801)).